The primary structure comprises 283 residues: uncharacterized protein (283 aa).

Positions 1-23 are cleaved as a signal peptide; sequence MFAFASFAISAIFFLCSFSYVSS.

The protein resides in the secreted. This is an uncharacterized protein from Schizosaccharomyces pombe (strain 972 / ATCC 24843) (Fission yeast).